The following is a 325-amino-acid chain: 5-dehydro-2-deoxygluconokinase (325 aa).

The protein belongs to the carbohydrate kinase PfkB family.

It catalyses the reaction 5-dehydro-2-deoxy-D-gluconate + ATP = 6-phospho-5-dehydro-2-deoxy-D-gluconate + ADP + H(+). It functions in the pathway polyol metabolism; myo-inositol degradation into acetyl-CoA; acetyl-CoA from myo-inositol: step 5/7. In terms of biological role, catalyzes the phosphorylation of 5-dehydro-2-deoxy-D-gluconate (2-deoxy-5-keto-D-gluconate or DKG) to 6-phospho-5-dehydro-2-deoxy-D-gluconate (DKGP). The sequence is that of 5-dehydro-2-deoxygluconokinase from Listeria monocytogenes serotype 4a (strain HCC23).